Reading from the N-terminus, the 533-residue chain is Protein disulfide isomerase-like 1-5 (533 aa).

The N-terminal stretch at 1-22 (MRARRVVAAAAVLLLFAVVAVA) is a signal peptide. Thioredoxin domains follow at residues 51 to 196 (LGGG…KDQT) and 387 to 516 (LLEG…EKLQ). Residue cysteine 97 is the Nucleophile of the active site. Asparagine 151 carries N-linked (GlcNAc...) asparagine glycosylation. Active-site nucleophile residues include cysteine 436 and cysteine 439. Cysteine 436 and cysteine 439 are disulfide-bonded. Positions 530–533 (KDEL) match the Prevents secretion from ER motif.

This sequence belongs to the protein disulfide isomerase family.

The protein resides in the endoplasmic reticulum lumen. The enzyme catalyses Catalyzes the rearrangement of -S-S- bonds in proteins.. Its function is as follows. Acts as a protein-folding catalyst that interacts with nascent polypeptides to catalyze the formation, isomerization, and reduction or oxidation of disulfide bonds. May play a role in storage protein biogenesis. The polypeptide is Protein disulfide isomerase-like 1-5 (PDIL1-5) (Oryza sativa subsp. japonica (Rice)).